We begin with the raw amino-acid sequence, 268 residues long: NAD kinase (268 aa).

Aspartate 45 functions as the Proton acceptor in the catalytic mechanism. NAD(+)-binding positions include 45-46 (DG), 122-123 (NE), arginine 148, aspartate 150, 161-166 (TAYGKS), alanine 185, and glutamine 223.

This sequence belongs to the NAD kinase family. Requires a divalent metal cation as cofactor.

Its subcellular location is the cytoplasm. The catalysed reaction is NAD(+) + ATP = ADP + NADP(+) + H(+). Involved in the regulation of the intracellular balance of NAD and NADP, and is a key enzyme in the biosynthesis of NADP. Catalyzes specifically the phosphorylation on 2'-hydroxyl of the adenosine moiety of NAD to yield NADP. This Latilactobacillus sakei subsp. sakei (strain 23K) (Lactobacillus sakei subsp. sakei) protein is NAD kinase.